A 214-amino-acid chain; its full sequence is MNVFRISGDVSHLLAIIILLLKMWKSKSCAGISGKSQLLFALVFTTRYLDLFTVFISAYNTVMKIVFLVCAYVTVYLIYGKFRKAYDSENDTFRLEFLLVPVIGLSFLENYEFTPLEILWTFSIYLESVAILPQLFMISKTGEAESITTHYLFFLGLYRVLYLANWIWRYHTEKFYDQIAVVSGVVQTIFYFDFFYLYITKVLKGKKLSLPMPV.

Over 1-4 (MNVF) the chain is Lumenal. A helical membrane pass occupies residues 5–24 (RISGDVSHLLAIIILLLKMW). The Cytoplasmic portion of the chain corresponds to 25-32 (KSKSCAGI). A helical membrane pass occupies residues 33-52 (SGKSQLLFALVFTTRYLDLF). The segment at 47–48 (RY) is interaction with the K-D-E-L motif on target proteins. Over 53–58 (TVFISA) the chain is Lumenal. The chain crosses the membrane as a helical span at residues 59–79 (YNTVMKIVFLVCAYVTVYLIY). Residues 80-92 (GKFRKAYDSENDT) lie on the Cytoplasmic side of the membrane. Residues 93–110 (FRLEFLLVPVIGLSFLEN) form a helical membrane-spanning segment. At 111–116 (YEFTPL) the chain is on the lumenal side. Residues 117–135 (EILWTFSIYLESVAILPQL) form a helical membrane-spanning segment. The Cytoplasmic portion of the chain corresponds to 136–149 (FMISKTGEAESITT). The helical transmembrane segment at 150 to 168 (HYLFFLGLYRVLYLANWIW) threads the bilayer. Residues 159-169 (RVLYLANWIWR) are interaction with the K-D-E-L motif on target proteins. At 169–178 (RYHTEKFYDQ) the chain is on the lumenal side. A helical membrane pass occupies residues 179-199 (IAVVSGVVQTIFYFDFFYLYI). The Cytoplasmic segment spans residues 200 to 214 (TKVLKGKKLSLPMPV). The segment at 204-207 (KGKK) is important for recycling of cargo proteins with the sequence motif K-D-E-L from the Golgi to the endoplasmic reticulum.

This sequence belongs to the ERD2 family.

Its subcellular location is the endoplasmic reticulum membrane. It localises to the golgi apparatus membrane. The protein resides in the cytoplasmic vesicle. It is found in the COPI-coated vesicle membrane. In terms of biological role, receptor for the C-terminal sequence motif K-D-E-L that is present on endoplasmic reticulum resident proteins and that mediates their recycling from the Golgi back to the endoplasmic reticulum. In Xenopus tropicalis (Western clawed frog), this protein is ER lumen protein-retaining receptor 3 (kdelr3).